The chain runs to 451 residues: ACT domain-containing protein ACR4 (451 aa).

4 ACT domains span residues Val-35–Ser-118, Val-123–Arg-200, Val-259–Gly-335, and Lys-337–Gln-416. The tract at residues Lys-409–Thr-428 is disordered. The segment covering Asn-410–Lys-420 has biased composition (polar residues).

In terms of tissue distribution, highly expressed in flowers and at lower levels in leaves and siliques.

Functionally, may bind amino acids. The sequence is that of ACT domain-containing protein ACR4 from Arabidopsis thaliana (Mouse-ear cress).